We begin with the raw amino-acid sequence, 369 residues long: Quinolinate synthase (369 aa).

Residues His47 and Ser64 each contribute to the iminosuccinate site. Cys111 is a [4Fe-4S] cluster binding site. Iminosuccinate contacts are provided by residues 142–144 and Ser163; that span reads YVN. [4Fe-4S] cluster is bound at residue Cys231. Residues 257 to 259 and Thr274 contribute to the iminosuccinate site; that span reads HPE. Cys321 provides a ligand contact to [4Fe-4S] cluster.

Belongs to the quinolinate synthase family. Type 3 subfamily. [4Fe-4S] cluster serves as cofactor.

Its subcellular location is the cytoplasm. It carries out the reaction iminosuccinate + dihydroxyacetone phosphate = quinolinate + phosphate + 2 H2O + H(+). The protein operates within cofactor biosynthesis; NAD(+) biosynthesis; quinolinate from iminoaspartate: step 1/1. Its function is as follows. Catalyzes the condensation of iminoaspartate with dihydroxyacetone phosphate to form quinolinate. This is Quinolinate synthase from Bacillus pumilus (strain SAFR-032).